The following is a 309-amino-acid chain: Putative S-adenosyl-L-methionine-dependent methyltransferase Mflv_0743 (309 aa).

S-adenosyl-L-methionine contacts are provided by residues D134 and 163–164 (DL).

This sequence belongs to the UPF0677 family.

Functionally, exhibits S-adenosyl-L-methionine-dependent methyltransferase activity. The polypeptide is Putative S-adenosyl-L-methionine-dependent methyltransferase Mflv_0743 (Mycolicibacterium gilvum (strain PYR-GCK) (Mycobacterium gilvum (strain PYR-GCK))).